Here is a 353-residue protein sequence, read N- to C-terminus: Vomeronasal type-1 receptor 1 (353 aa).

The Extracellular portion of the chain corresponds to methionine 1–threonine 56. A helical transmembrane segment spans residues glycine 57 to glycine 77. The Cytoplasmic segment spans residues histidine 78–aspartate 84. Residues leucine 85 to glutamine 105 form a helical membrane-spanning segment. The Extracellular portion of the chain corresponds to threonine 106–threonine 132. An N-linked (GlcNAc...) asparagine glycan is attached at asparagine 117. Residues arginine 133–serine 153 form a helical membrane-spanning segment. The Cytoplasmic segment spans residues isoleucine 154–aspartate 169. The chain crosses the membrane as a helical span at residues phenylalanine 170 to valine 190. The Extracellular portion of the chain corresponds to asparagine 191–serine 226. Residue asparagine 198 is glycosylated (N-linked (GlcNAc...) asparagine). Residues proline 227 to tyrosine 247 traverse the membrane as a helical segment. Topologically, residues arginine 248–threonine 274 are cytoplasmic. A helical transmembrane segment spans residues isoleucine 275–tryptophan 295. Residues threonine 296–glycine 303 lie on the Extracellular side of the membrane. The helical transmembrane segment at glutamine 304–valine 324 threads the bilayer. The Cytoplasmic portion of the chain corresponds to leucine 325–proline 353.

Belongs to the G-protein coupled receptor 1 family. As to expression, expressed in the olfactory mucosa, very low expression in brain, lung and kidney.

The protein resides in the cell membrane. In terms of biological role, putative pheromone receptor. This is Vomeronasal type-1 receptor 1 (VN1R1) from Homo sapiens (Human).